We begin with the raw amino-acid sequence, 271 residues long: Cartilage-associated protein (271 aa).

The signal sequence occupies residues 1-15 (MWRTLLAALLATAGA). N-linked (GlcNAc...) asparagine glycosylation occurs at Asn-76.

The protein belongs to the leprecan family. Found in articular chondrocytes. Expressed in a variety of tissues.

It is found in the secreted. Its subcellular location is the extracellular space. It localises to the extracellular matrix. Functionally, necessary for efficient 3-hydroxylation of fibrillar collagen prolyl residues. The sequence is that of Cartilage-associated protein (CRTAP) from Gallus gallus (Chicken).